We begin with the raw amino-acid sequence, 224 residues long: Response regulator protein GraR (224 aa).

The 114-residue stretch at 2-115 (QILLVEDDNT…VLIAKLQAIY (114 aa)) folds into the Response regulatory domain. Residue Asp51 is modified to 4-aspartylphosphate. Positions 126 to 224 (KRTLSWQDAT…KVGKGYLAHE (99 aa)) form a DNA-binding region, ompR/PhoB-type.

In terms of processing, phosphorylated by GraS.

Its subcellular location is the cytoplasm. Functionally, member of the two-component regulatory system GraR/GraS involved in resistance against cationic antimicrobial peptides (CAMPs). The protein is Response regulator protein GraR (graR) of Staphylococcus epidermidis (strain ATCC 35984 / DSM 28319 / BCRC 17069 / CCUG 31568 / BM 3577 / RP62A).